We begin with the raw amino-acid sequence, 436 residues long: MALNVNRAVADPFYRYKMPKLSAKVEGKGNGIKTVISNMSEIAKALERPPMYPTKYFGCELGAQTNFDAKNERYIVNGEHDANKLQDILDGFIKKFVLCKSCENPETQLFVRKNNIKSKCKACGCSFDIDLKHKLSTFIMKNPPKIDVDFSKAEQKNGKKTSGADAAAAVAADIIHNSDKGSSNDDDDDDWEPEPVEPNGMLSAGMGKLVLDKDLEKSEEQRLDMLHTFFLKAKEEDRISDAKGQTALRDEAERLELKQKASLLLANVFLDEKVITDKQISKHRNLLLRFTLNDKKAQRYLLGGVEQVIHKHEAELLSKSAHIIKSLYDEDVCEEDSLISWGEKPSSKYVSKSFAKKIIENSQPVLNWLKEAEEETEEESDDEIAFGGDVKESEFLRQQKEKAAREAQQKSAKATNGNAAAASGANDEEDLDIDDI.

27–34 (GKGNGIKT) contributes to the GTP binding site. The interval 177 to 203 (NSDKGSSNDDDDDDWEPEPVEPNGMLS) is disordered. Residues 184 to 195 (NDDDDDDWEPEP) are compositionally biased toward acidic residues. The 164-residue stretch at 216–379 (EKSEEQRLDM…KEAEEETEEE (164 aa)) folds into the W2 domain. Residues 396-408 (LRQQKEKAAREAQ) show a composition bias toward basic and acidic residues. The disordered stretch occupies residues 396–436 (LRQQKEKAAREAQQKSAKATNGNAAAASGANDEEDLDIDDI). Over residues 409 to 425 (QKSAKATNGNAAAASGA) the composition is skewed to low complexity. Residues 426 to 436 (NDEEDLDIDDI) are compositionally biased toward acidic residues.

Belongs to the eIF-2-beta/eIF-5 family.

Its function is as follows. Catalyzes the hydrolysis of GTP bound to the 40S ribosomal initiation complex (40S.mRNA.Met-tRNA[F].eIF-2.GTP) with the subsequent joining of a 60S ribosomal subunit resulting in the release of eIF-2 and the guanine nucleotide. The subsequent joining of a 60S ribosomal subunit results in the formation of a functional 80S initiation complex (80S.mRNA.Met-tRNA[F]). The sequence is that of Eukaryotic translation initiation factor 5 from Caenorhabditis elegans.